A 247-amino-acid chain; its full sequence is Caffeoyl-CoA O-methyltransferase (247 aa).

Lys-21 contributes to the substrate binding site. Residues Thr-63, Glu-85, 87-88, Ser-93, Asp-111, and Ala-140 each bind S-adenosyl-L-methionine; that span reads GV. Asp-163 serves as a coordination point for substrate. Asp-163 is a binding site for a divalent metal cation. An S-adenosyl-L-methionine-binding site is contributed by Asp-165. A divalent metal cation is bound by residues Asp-189 and Asn-190. Asn-194 serves as a coordination point for substrate.

Belongs to the class I-like SAM-binding methyltransferase superfamily. Cation-dependent O-methyltransferase family. CCoAMT subfamily. Requires a divalent metal cation as cofactor.

It carries out the reaction (E)-caffeoyl-CoA + S-adenosyl-L-methionine = (E)-feruloyl-CoA + S-adenosyl-L-homocysteine + H(+). Its pathway is aromatic compound metabolism; phenylpropanoid biosynthesis. Methylates caffeoyl-CoA to feruloyl-CoA and 5-hydroxyferuloyl-CoA to sinapoyl-CoA. Plays a role in the synthesis of feruloylated polysaccharides. Involved in the reinforcement of the plant cell wall. Also involved in the responding to wounding or pathogen challenge by the increased formation of cell wall-bound ferulic acid polymers. The sequence is that of Caffeoyl-CoA O-methyltransferase from Populus tremuloides (Quaking aspen).